A 324-amino-acid polypeptide reads, in one-letter code: D-alanine--D-alanine ligase (324 aa).

The 201-residue stretch at 121 to 321 (NQYLKAFGVR…IKDVMTDIIE (201 aa)) folds into the ATP-grasp domain. Position 149–204 (149–204 (VEKIGLPCFIKPNLGGSSFGVTKVKTREQIQPAIAKAFSEAEEVMIEAFMGGTELT)) interacts with ATP. Residues Asp-275, Glu-288, and Asn-290 each coordinate Mg(2+).

Belongs to the D-alanine--D-alanine ligase family. Requires Mg(2+) as cofactor. Mn(2+) serves as cofactor.

The protein resides in the cytoplasm. The enzyme catalyses 2 D-alanine + ATP = D-alanyl-D-alanine + ADP + phosphate + H(+). The protein operates within cell wall biogenesis; peptidoglycan biosynthesis. Its function is as follows. Cell wall formation. This chain is D-alanine--D-alanine ligase, found in Bacteroides fragilis (strain YCH46).